The primary structure comprises 377 residues: Dehydrogenase/reductase SDR family member 13 (377 aa).

The N-terminal stretch at 1 to 25 is a signal peptide; that stretch reads MEALLLGAGLLLGAYVLVYYNLVKA. Residues Ser-46 and Ile-48 each contribute to the NAD(+) site. Ser-170 lines the substrate pocket. The NAD(+) site is built by Tyr-197, Lys-201, and Ser-232. Catalysis depends on Tyr-197, which acts as the Proton acceptor. A disordered region spans residues 309–377; sequence RLAGLGPGED…AKVEPEIQLS (69 aa). Residues 317–331 are compositionally biased toward acidic residues; the sequence is EDAEPDEDPQSEDSE. A compositionally biased stretch (low complexity) spans 347-357; the sequence is SQPYPSPQSSP. The span at 368 to 377 shows a compositional bias: basic and acidic residues; the sequence is AKVEPEIQLS.

It belongs to the short-chain dehydrogenases/reductases (SDR) family.

Its subcellular location is the secreted. In terms of biological role, putative oxidoreductase. This chain is Dehydrogenase/reductase SDR family member 13, found in Homo sapiens (Human).